We begin with the raw amino-acid sequence, 4128 residues long: MAEEGTGVRCWLLQLQEFLSAADRCSAAGASYQLIRSLGQECVLSTSSAVQALQISLVFSRDFGLLVFIRKSLSIEDFRDCREEALKFLCVFLEKIDQKVMHYSLDIKNTCTSVYTKDRTAKCKIPALDLLIKLLQILRSTRLMDEFKIGELFNKFYGELASKSKLPDTVLEKVYELLGVLGEVHPSEMINHSENLFRAFLGELKTQMTSTVREPKFPVLAGCLKGLSSLLCNFTKSMEEDPQTSKEIFGFTFKAIRPQIEMKRYAVPLAGLRLLTLHASQFTACLLDNYITLFEVLSKWCSHTNVELKKAAHSALESFLRQISFTVAEDAELHKSRLKYFMEQFYGIIRNTDSNNKELAIAIRGYGLFAGPCKVINAKDVDFMYVELIQRCKQMFLTHADASEDHVYQMPSFLQSIASVLLYLDTVPEVYTPVLEHLMVVQIDSFPQYSPKMQLVCCKAIIKLFLALSEKGPVHWNCISAVVHQGLIRICSKPVVLQKDVESRSDNRSASEEVRTGRWKVPTYKDYVDLFQHLLGCDQMEDFILGDETFLFVNSSLKSLNHLLYDEFIRSVLKIVEKLDLTLEKQTVGEQEDGSTADVWVIPTSDPAANLHPAKPSDFSALINLVEFCREILPRKHVGFFEPWVYSFAYELILQSTRLPLISGFYKLLSIAVKNARKIKYFEGISPKSLKHSPEDTEKYSCFALFAKFGKEVSVKMKQYKDELLASCLTFVLSLPHDIIELDVRAYVPALQMAFKLGLSHMPLAEIGLHALKEWSVHIDKSILQPYYKDILPCLDGYLNTSTLSDETKSHWGLSALSRAAQKGFNRHVVKHLKRTRNSSPDEALSLEEIRIKVVQILGSLGGQINKSLVTATSGERMKKYVAWDAERRLSFAVPFREMKPVIYLDVFLPRVTELALSASDRQTKVAACELLHSMVMFMLGRATQMPEGQGLPPMYQLYKHTFPVLLQLACDVDQVTRQLYEPLVMQLIHWLTNNKKFESQDTVALLEAILDGIVDPVDSTLRDFCGRCVQEFLKWSIKQTTPQQQEKSPVNSKSLFKRLYSLALHPNAFKRLGAALAFNHIYKEFREEGSLVEQFVFEALVTYMESLALAHEDEKSLGTVQQCCDAIDHLRRIIEKKHVSLNKAKKRRLPQGFPPLTSLCLLDLVEWLLAHCGRPQTECRHKSMELFYKFVPLLPGNKSPSLWLKDLIKKKGISFLINTFEGGASSSDQPAGILAQPTLVYLQGPISLRGVLQWLDLLLAALECYNTFIEKETVQGQEVLGAEVQSSLLKSVAFFLESIATHSARAVEQRFGSGAPGPPSLHEEEKYNYSKCTVLVRIMEFTTTLLIASPEDCKLLEKDLCNTNLMQVLVKMICEPMSLGFNIGDVQVMNHLPSICVNLLKALRKSPYRDMLETHLKEKVTVQSVEELCSINLCSSGARQERSKLLSILSACKQLHKAGFSHVISPSQSTALNHSVGMRLLSLVYKGIVPAEERQCLQSLDPSCKSLANGLLELAFGFGGLCDHLVSLLLNSAMLSTQYLGSSQRNISFSHGEYFYSLFSEVINSELLKNLDIAVSRLMESSSDNPKMVSTVLNGMLDTSFRDRAVQKHQGLKLATAILQNWRKCDSWWAPDSAPESKTTVLSLLAKMLQIDSALSFDTNHSSFSEIFTTYASLLADTKLGLHLKGQAIILLPFFTSLREGSLENLKHILEKLIVCNFPMKSDEFPPDSLKYNNYVDCMKKFLDALELSQSPMLFQLMTDILCREQRHIMEELFQTTFKRIARQSPCVTQLNLLESVYTMFRKADLPSNVTRQAFVDRSLLTLLWHCDLDTLKEFFSRIVVDAIDVLKSRFTKLNEFTFDTQITKKMCYYKMLAVMYSRLLKDDVHSKEAKINQAFHGSRVAEGNELTKTLLKLCHDAFTENMVGESQLLEKRRLYHCAAYNCAISLISCVFNELKFYQGFLFNEKPEKNLFIFENLIDLKRCYTFPIEVEVPMERKKKYIEIRKEARDAANGASGSPHYMSSLSYLTDSSLSEEMSQFDFSTGVQSYSYSSQDRKPTTGHFQRREHQDSMTQDDIMELEMDELNQHECMAPMIALIKHMQRNVIAPKGEEGSIPKDLPPWMKFLHDKLGNASVSLNIRLFLAKLVINTEEVFRPYAKHWLSPLLQLAVCENNREGIHYMMVEIVATILSWTGLATPTGVPKDEVLANRLLRFLMKHVFHPKRAVFRHNLEIIKTLVECWKECLSIPYRLIFEKFSHKDPNSKDNSVGIQLLGIVIANNLPPYDPNCDITSAMYFEALVNNMSFVKYKEVYAAAAEVLGLILQYITERKHVIAELVCELVIKQLKQHQNTMEDKFIVCLNKIAKGFPPLADRFLNALFFLLPKFHGVMKTLCLEVVLCRAEEITGLYLQLKSKDFLQVMRHRDDERQKVCLDIVYKMVAKLKPIELRELLNPVVEFVSHPSPTCREQMYNILMWIHDNYRDQESQNDEDSQEIFKLAKDVLIQGLIDENVGLQLIIRNFWSHETRLPSNTLDRLLALNSLYSPKIEVHFLSLATNFLLEMTRMSPDYLNPIFEHPLSECEFQEYTIDPDWRFRSTVLTPMFIETQASPSILHTQTQEGPLSDQRQKPGQVRATQQQYDFTPTQASVERSSFDWLTGSSIDLLADHTVFSSETLSSSLLFSHKRTEKSQRMSCKSVGPDFGTKKLGLPDDEVDNQVKSGTPSQADILRLRRRFLKDREKLSLLYAKRGLMEQKLEKDIKSEFKMKQDAQVVLYRSYRHGDLPDIQIQHSGLITPLQAVAQKDPIIAKQLFSSLFSGILKEMNKFKTTSEKNIITQNLLQDFNRFLNTTFLFFPPFVSCIQEISCQHPDFLTLDPASVRVGCLASLQQPGGIRLLEEALLRLMPKEPPTKRVRGKTCLPPDVLRWMELAKLYRSIGEYDVLRGIFSSELGTTQDTQNALLAEARSDYCQAAKLYDEALNKLEWVDGEPTEAEKEFWELASLDCYNNLSKWKELEYCSTVNIVSENSLDLSKMWSEPFYQETYLPYVIRSKLKLLLQGEGNQSLLTFVDEAMNKELQKTVLELQYSQELSLLYILQDDIDRATYYIKNGIQIFMQNYSSIDVLLYRSRLAKLQSVQTLAEIEEFLSFICKHGDLSSLGPLRRLLKTWTSRYPDVVTDPMHIWDDIITNRCFFLSKIEERLTAPSGDHSMSVDEDEESIDREVYEPKEDVRCMLQSCRFTMKMKMIESAWKQSNFSLSMKLLKEMHKESKTREIWRVQWLHSYSQLNHCRSHTQSPREQVLNMLKTITLLDESDISNYLNKNIQASCDQSILLGTTCRIMADALSREPACLSDLEENKVNSILTLSGSNAENTETVITGLYQRAFHHLSKAVQSAEEETQLSCWGHEAAAERAHAYMTLVGFCDQQLRKVEESASQKTSAEMEAYPALVVEKMLRALKLNSSEARLKFPRLLQIIEQYSEETLNIMTKEISSIPCWQFIGWISHMMALLDKEEAIAVQHTVEEIADNYPQAIIYPFIISSESYSFKNTSSGHNNKAFVERIKSKLDHGEVIHSFINALDQLSNPDLLFKDWVSDTKDELGKNPVNKKNIEKLYERMYAALGDLRAPGLGPFRRRFIQAFGKEFVKSFGNGGSKLLTMKVDDFCKITGSLLVRMKKDSKLPGNLKEYSPWMSEFKAQFLKNELEIPGQYDGKSKPLPEYHVRISGFDERVKVMLSLRKPKRIVIRGHDEKEYPFLVKGGEDLRQDQRIEQIFEVMNAILSQDAACSQRNMQLRTYRVVPMTSRLGLIEWIENTMTLKDLLLSNMSQEEKVANNSDPKAPIRDYKDWLMKVSGKSDAGAYVLMYSRANRTETVVAFRRRESQVPPDLLKRAFVKMSTSPEAFLALRSHFASSHALLCISHWLLGIGDRHLNNFMVAMETGSVIGIDFGHAFGSATQFLPVPELMPFRLTRQFVSLMLPMKETGLMCTVMVHALRAFRSCAGLLTDTMEIFVKEPSFDWKSFEQTMLRKGGSWIQEINVTEKNWYPQHKIRYAKRKLAGANPAVITCDELYLGHEASSAFRSYTAVARGNRDYNIRAQEPESGLSEETQVKCLVDQATDPNILGRTWEGWEPWM.

Position 117 is an N6-acetyllysine (lysine 117). Residues 288-323 form an HEAT 1 repeat; sequence DNYITLFEVLSKWCSHTNVELKKAAHSALESFLRQI. Phosphoserine occurs at positions 511, 686, 840, and 891. 2 HEAT repeats span residues 1001 to 1037 and 1050 to 1086; these read QDTVALLEAILDGIVDPVDSTLRDFCGRCVQEFLKWS and PVNSKSLFKRLYSLALHPNAFKRLGAALAFNHIYKEF. A Phosphoserine modification is found at serine 1062. N6-acetyllysine is present on lysine 1206. An interaction with C1D region spans residues 1501-1536; that stretch reads LDPSCKSLANGLLELAFGFGGLCDHLVSLLLNSAML. Positions 1501 to 1536 are leucine-zipper; it reads LDPSCKSLANGLLELAFGFGGLCDHLVSLLLNSAML. Residues 1720-1753 form a TPR 1 repeat; it reads PMKSDEFPPDSLKYNNYVDCMKKFLDALELSQSP. Lysine 1967 carries the post-translational modification N6-acetyllysine. Residues 2049–2071 form a disordered region; that stretch reads YSYSSQDRKPTTGHFQRREHQDS. Position 2053 is a phosphoserine; by autocatalysis (serine 2053). Positions 2054 to 2070 are enriched in basic and acidic residues; sequence QDRKPTTGHFQRREHQD. N6-acetyllysine is present on lysine 2255. Residues 2432-3213 are KIP-binding; the sequence is LDIVYKMVAK…DHSMSVDEDE (782 aa). At threonine 2531 the chain carries Phosphothreonine. A Phosphothreonine; by autocatalysis modification is found at threonine 2605. A Phosphoserine; by autocatalysis modification is found at serine 2608. Residues 2614-2635 form a disordered region; that stretch reads TQTQEGPLSDQRQKPGQVRATQ. Phosphothreonine; by autocatalysis is present on residues threonine 2634 and threonine 2643. A may split the end of the DNA molecule, with the two strands separating around the region region spans residues 2738-2766; sequence EKLSLLYAKRGLMEQKLEKDIKSEFKMKQ. The FAT domain maps to 2907 to 3539; sequence PTKRVRGKTC…IYPFIISSES (633 aa). 2 TPR repeats span residues 2921–2954 and 2956–2983; these read VLRWMELAKLYRSIGEYDVLRGIFSSELGTTQDT and NALLAEARSDYCQAAKLYDEALNKLEWV. Phosphoserine is present on serine 3206. N6-acetyllysine is present on residues lysine 3241, lysine 3260, lysine 3638, and lysine 3642. The 332-residue stretch at 3722–4053 folds into the PI3K/PI4K catalytic domain; that stretch reads FDERVKVMLS…IRYAKRKLAG (332 aa). A G-loop region spans residues 3728–3734; the sequence is VMLSLRK. Phosphoserine is present on residues serine 3731 and serine 3821. Positions 3919–3927 are catalytic loop; that stretch reads GIGDRHLNN. The tract at residues 3939 to 3964 is activation loop; that stretch reads GIDFGHAFGSATQFLPVPELMPFRLT. Serine 4026 bears the Phosphoserine mark. Residues 4096 to 4128 form the FATC domain; sequence SGLSEETQVKCLVDQATDPNILGRTWEGWEPWM.

This sequence belongs to the PI3/PI4-kinase family. In terms of assembly, DNA-PK is a heterotrimer of PRKDC and the Ku dimer (composed of XRCC6/Ku70 and XRCC5/Ku86). Formation of this complex may be promoted by interaction with ILF3. Component of the core long-range non-homologous end joining (NHEJ) complex (also named DNA-PK complex) composed of PRKDC, LIG4, XRCC4, XRCC6/Ku70, XRCC5/Ku86 and NHEJ1/XLF. Additional component of the NHEJ complex includes PAXX. Following autophosphorylation, PRKDC dissociates from DNA. Interacts with DNA-PKcs-interacting protein (KIP) with the region upstream the kinase domain. PRKDC alone also interacts with and phosphorylates DCLRE1C, thereby activating the latent endonuclease activity of this protein. Interacts with C1D. Interacts with TTI1 and TELO2. Interacts with CIB1. Interacts with SETX. Interacts with NR4A3; the DNA-dependent protein kinase complex DNA-PK phosphorylates and activates NR4A3 and prevents NR4A3 ubiquitination and degradation. Interacts with BRAT1. Part of the HDP-RNP complex composed of at least HEXIM1, PRKDC, XRCC5, XRCC6, paraspeckle proteins (SFPQ, NONO, PSPC1, RBM14, and MATR3) and NEAT1 RNA. Interacts with KAT5. Post-translationally, autophosphorylated at two clusters, the T2609 cluster and the S2056 cluster. Autophosphorylated on Ser-2053, Thr-2605, Thr-2634 and Thr-2643. Ser-2053 and Thr-2605 are DNA damage-inducible phosphorylation sites (inducible with ionizing radiation, IR) dephosphorylated by PPP5C. Autophosphorylation induces a conformational change that leads to remodeling of the DNA-PK complex, requisite for efficient end processing and DNA repair. Autophosphorylation in trans within DNA-PK complexes loaded on DNA ends leads to the dissociation of PRKDC from DNA and the transition into the short-range NHEJ complex. Autophosphorylation of the T2609 cluster is required for hematopoietic development and protein synthesis in erythrocytes precursors. In terms of processing, S-nitrosylated by GAPDH. Polyubiquitinated by RNF144A, leading to proteasomal degradation.

The protein localises to the nucleus. Its subcellular location is the nucleolus. It localises to the cytoplasm. It is found in the cytosol. The enzyme catalyses L-seryl-[protein] + ATP = O-phospho-L-seryl-[protein] + ADP + H(+). The catalysed reaction is L-threonyl-[protein] + ATP = O-phospho-L-threonyl-[protein] + ADP + H(+). Activity seems to be attenuated by autophosphorylation. Binding to the SL1 region of U3 small nucleolar RNA promotes auto-phosphorylation activity. Inhibited by wortmannin. Its function is as follows. Serine/threonine-protein kinase that acts as a molecular sensor for DNA damage. Involved in DNA non-homologous end joining (NHEJ) required for double-strand break (DSB) repair and V(D)J recombination. Must be bound to DNA to express its catalytic properties. Promotes processing of hairpin DNA structures in V(D)J recombination by activation of the hairpin endonuclease artemis (DCLRE1C). Recruited by XRCC5 and XRCC6 to DNA ends and is required to (1) protect and align broken ends of DNA, thereby preventing their degradation, (2) and sequester the DSB for repair by NHEJ. Acts as a scaffold protein to aid the localization of DNA repair proteins to the site of damage. The assembly of the DNA-PK complex at DNA ends is also required for the NHEJ ligation step. Found at the ends of chromosomes, suggesting a further role in the maintenance of telomeric stability and the prevention of chromosomal end fusion. Also involved in modulation of transcription. As part of the DNA-PK complex, involved in the early steps of ribosome assembly by promoting the processing of precursor rRNA into mature 18S rRNA in the small-subunit processome. Binding to U3 small nucleolar RNA, recruits PRKDC and XRCC5/Ku86 to the small-subunit processome. Recognizes the substrate consensus sequence [ST]-Q. Phosphorylates 'Ser-139' of histone variant H2AX, thereby regulating DNA damage response mechanism. Phosphorylates ASF1A, DCLRE1C, c-Abl/ABL1, histone H1, HSPCA, c-jun/JUN, p53/TP53, PARP1, POU2F1, DHX9, FH, SRF, NHEJ1/XLF, XRCC1, XRCC4, XRCC5, XRCC6, WRN, MYC and RFA2. Can phosphorylate C1D not only in the presence of linear DNA but also in the presence of supercoiled DNA. Ability to phosphorylate p53/TP53 in the presence of supercoiled DNA is dependent on C1D. Acts as a regulator of the phosphatidylinositol 3-kinase/protein kinase B signal transduction by mediating phosphorylation of 'Ser-473' of protein kinase B (PKB/AKT1, PKB/AKT2, PKB/AKT3), promoting their activation. Contributes to the determination of the circadian period length by antagonizing phosphorylation of CRY1 'Ser-588' and increasing CRY1 protein stability, most likely through an indirect mechanism. Plays a role in the regulation of DNA virus-mediated innate immune response by assembling into the HDP-RNP complex, a complex that serves as a platform for IRF3 phosphorylation and subsequent innate immune response activation through the cGAS-STING pathway. Also regulates the cGAS-STING pathway by catalyzing phosphorylation of CGAS, thereby impairing CGAS oligomerization and activation. Also regulates the cGAS-STING pathway by mediating phosphorylation of PARP1. The polypeptide is DNA-dependent protein kinase catalytic subunit (Prkdc) (Mus musculus (Mouse)).